Here is a 290-residue protein sequence, read N- to C-terminus: Arylamine N-acetyltransferase, pineal gland isozyme NAT-10 (290 aa).

Cys68 (acyl-thioester intermediate) is an active-site residue. Active-site residues include His107 and Asp122.

It belongs to the arylamine N-acetyltransferase family.

The catalysed reaction is an arylamine + acetyl-CoA = an N-acetylarylamine + CoA. In Gallus gallus (Chicken), this protein is Arylamine N-acetyltransferase, pineal gland isozyme NAT-10.